The primary structure comprises 327 residues: Cytochrome P450 2C42 (327 aa).

Cys272 is a heme binding site.

This sequence belongs to the cytochrome P450 family. Heme serves as cofactor.

The protein resides in the endoplasmic reticulum membrane. It localises to the microsome membrane. The enzyme catalyses an organic molecule + reduced [NADPH--hemoprotein reductase] + O2 = an alcohol + oxidized [NADPH--hemoprotein reductase] + H2O + H(+). In terms of biological role, cytochromes P450 are a group of heme-thiolate monooxygenases. In liver microsomes, this enzyme is involved in an NADPH-dependent electron transport pathway. It oxidizes a variety of structurally unrelated compounds, including steroids, fatty acids, and xenobiotics. In Sus scrofa (Pig), this protein is Cytochrome P450 2C42 (CYP2C42).